The primary structure comprises 210 residues: MLPDGLSAEDEQRCRQLLARTTARLRSRPAAAAVLVPLCLVRGVPALLYTLRSSRLVGRHKGEVSFPGGKCDPDDQDVIHTALRETQEELGLEVPKEHVWGVLQPVYDREKATIVPVLANVGPLDLQSLRPNLEEVDEVFEMSLAHLLQTQNQGYTHFCQGGHFSYTLPVFLHGPHRVWGLTAVITELTLKLLAPGFYQPSLAVPELPRG.

The Nudix hydrolase domain occupies 25 to 172 (LRSRPAAAAV…HFSYTLPVFL (148 aa)). N6-succinyllysine is present on lysine 70. The Nudix box motif lies at 70–91 (KCDPDDQDVIHTALRETQEELG). Positions 85 and 89 each coordinate Mg(2+). An N6-succinyllysine modification is found at lysine 96.

This sequence belongs to the Nudix hydrolase family. Monomer. It depends on Mg(2+) as a cofactor. Mn(2+) is required as a cofactor. As to expression, expressed at the highest levels in the kidneys, heart, brown adipose tissue and liver (at protein level). Expressed at lower levels in the brain, skeletal muscle, and white adipose tissue (at protein level).

It localises to the mitochondrion. It carries out the reaction an acyl-CoA + H2O = an acyl-4'-phosphopantetheine + adenosine 3',5'-bisphosphate + 2 H(+). The enzyme catalyses CoA + H2O = (R)-4'-phosphopantetheine + adenosine 3',5'-bisphosphate + 2 H(+). It catalyses the reaction acetyl-CoA + H2O = S-acetyl-4'-phosphopantetheine + adenosine 3',5'-bisphosphate + 2 H(+). The catalysed reaction is butanoyl-CoA + H2O = S-butanoyl-4'-phosphopantetheine + adenosine 3',5'-bisphosphate + 2 H(+). It carries out the reaction hexanoyl-CoA + H2O = hexanoyl-4'-phosphopantetheine + adenosine 3',5'-bisphosphate + 2 H(+). The enzyme catalyses octanoyl-CoA + H2O = S-octanoyl-4'-phosphopantetheine + adenosine 3',5'-bisphosphate + 2 H(+). It catalyses the reaction propanoyl-CoA + H2O = propanoyl-4'-phosphopantetheine + adenosine 3',5'-bisphosphate + 2 H(+). The catalysed reaction is malonyl-CoA + H2O = malonyl-4'-phosphopantetheine + adenosine 3',5'-bisphosphate + 2 H(+). It carries out the reaction succinyl-CoA + H2O = succinyl-4'-phosphopantetheine + adenosine 3',5'-bisphosphate + 2 H(+). The enzyme catalyses a 5'-end CoA-ribonucleoside in mRNA + H2O = a 5'-end phospho-adenosine-phospho-ribonucleoside in mRNA + (R)-4'-phosphopantetheine + 2 H(+). Acyl-CoA diphosphatase that mediates the hydrolysis of a wide range of CoA and CoA esters yielding 3',5'-ADP and the corresponding 4'-phosphopantetheine derivative as products. Hydrolyzes short- and medium-chain acyl-CoAs, exhibiting the highest activity toward free CoA, hexanoyl-CoA, and octanoyl-CoA and the lowest activity against acetyl-CoA. Exhibits decapping activity towards dpCoA-capped RNAs in vitro. The chain is Mitochondrial coenzyme A diphosphatase NUDT8 (Nudt8) from Mus musculus (Mouse).